The primary structure comprises 192 residues: Natural cytotoxicity triggering receptor 3 (192 aa).

Positions 1 to 18 are cleaved as a signal peptide; sequence MAKVLLIVFIMVYAGSCA. Positions 19–126 constitute an Ig-like domain; sequence IWVSQPPEIR…VGTGNGTRLV (108 aa). The Extracellular segment spans residues 19–147; it reads IWVSQPPEIR…AEPERAAYTS (129 aa). Cys-39 and Cys-108 form a disulfide bridge. Residues Asn-42 and Asn-121 are each glycosylated (N-linked (GlcNAc...) asparagine). The chain crosses the membrane as a helical span at residues 148 to 168; the sequence is LLLRAGVYALSFLSVATGSVI. The Cytoplasmic portion of the chain corresponds to 169–192; sequence YYQGKCLCHVGNTATPPTASEERF.

The protein belongs to the natural cytotoxicity receptor (NCR) family. Homodimer in the unliganted form. Interacts with CD3Z. Interacts with and is activated by binding to NCR3LG1. Interacts with and is activated by binding to BAG6. Interacts with and is inhibited by binding to LGALS3.

The protein localises to the cell membrane. Its function is as follows. Cell membrane receptor of natural killer/NK cells that is activated by binding of extracellular ligands including BAG6 and NCR3LG1. Stimulates NK cells cytotoxicity toward neighboring cells producing these ligands. It controls, for instance, NK cells cytotoxicity against tumor cells. Engagement of NCR3 by BAG6 also promotes myeloid dendritic cells (DC) maturation, both through killing DCs that did not acquire a mature phenotype, and inducing the release by NK cells of TNFA and IFNG that promote DC maturation. This Rattus norvegicus (Rat) protein is Natural cytotoxicity triggering receptor 3 (Ncr3).